A 551-amino-acid polypeptide reads, in one-letter code: L-lactate permease (551 aa).

The next 13 helical transmembrane spans lie at 13 to 33 (NIWL…FALI), 37 to 57 (LKGY…ALLF), 69 to 89 (VVYG…AAVF), 131 to 151 (GAAG…GLGF), 159 to 179 (LCLI…PILV), 194 to 214 (MVGR…MAIM), 220 to 240 (IKET…AQYL), 244 to 264 (FIGP…CLTL), 366 to 386 (FDWF…SIVW), 405 to 425 (LALP…SNYS), 438 to 458 (TGHA…FLTG), 494 to 514 (VTGK…VGLV), and 530 to 550 (IFTC…TWMI).

Belongs to the lactate permease family.

It localises to the cell inner membrane. It catalyses the reaction (S)-lactate(in) + H(+)(in) = (S)-lactate(out) + H(+)(out). The catalysed reaction is (R)-lactate(in) + H(+)(in) = (R)-lactate(out) + H(+)(out). It carries out the reaction glycolate(in) + H(+)(in) = glycolate(out) + H(+)(out). With respect to regulation, inhibited by the proton ionophore carbonyl cyanide m-chlorophenylhydrazone (CCCP). Uptake of L-lactate across the membrane. Can also transport D-lactate and glycolate. Seems to be driven by a proton motive force. The chain is L-lactate permease from Escherichia coli (strain K12).